A 361-amino-acid chain; its full sequence is Cytochrome c peroxidase, mitochondrial (361 aa).

Residues 1 to 67 constitute a mitochondrion transit peptide; it reads MTTAVRLLPS…NWGKAAALAS (67 aa). The active-site Proton acceptor is H119. A Phosphotyrosine modification is found at Y220. H242 contacts heme b. The active-site Tryptophan radical intermediate is W258.

This sequence belongs to the peroxidase family. Cytochrome c peroxidase subfamily. In terms of assembly, forms a one-to-one complex with cytochrome c. Heme b serves as cofactor. CCP1 precursor is processed by the rhomboid protease PCP1, which cleaves the N-terminal hydrophobic transit peptide. The m-AAA protease (composed of YTA12/RCA1 and YTA10/AFG3) is required for CCP1 maturation: m-AAA protease promotes membrane dislocation of the CCP1 transmembrane segment within the transit peptide to ensure the correct positioning of CCP1 within the membrane bilayer, allowing intramembrane cleavage by PCP1.

It localises to the mitochondrion matrix. The protein resides in the mitochondrion intermembrane space. It catalyses the reaction 2 Fe(II)-[cytochrome c] + H2O2 + 2 H(+) = 2 Fe(III)-[cytochrome c] + 2 H2O. Destroys radicals which are normally produced within the cells and which are toxic to biological systems. The chain is Cytochrome c peroxidase, mitochondrial (CCP1) from Saccharomyces cerevisiae (strain ATCC 204508 / S288c) (Baker's yeast).